A 191-amino-acid chain; its full sequence is Protein GrpE (191 aa).

The protein belongs to the GrpE family. Homodimer.

Its subcellular location is the cytoplasm. Its function is as follows. Participates actively in the response to hyperosmotic and heat shock by preventing the aggregation of stress-denatured proteins, in association with DnaK and GrpE. It is the nucleotide exchange factor for DnaK and may function as a thermosensor. Unfolded proteins bind initially to DnaJ; upon interaction with the DnaJ-bound protein, DnaK hydrolyzes its bound ATP, resulting in the formation of a stable complex. GrpE releases ADP from DnaK; ATP binding to DnaK triggers the release of the substrate protein, thus completing the reaction cycle. Several rounds of ATP-dependent interactions between DnaJ, DnaK and GrpE are required for fully efficient folding. The chain is Protein GrpE from Listeria monocytogenes serotype 4b (strain CLIP80459).